The following is a 309-amino-acid chain: Homoserine O-succinyltransferase (309 aa).

Catalysis depends on cysteine 142, which acts as the Acyl-thioester intermediate. Lysine 163 and serine 192 together coordinate substrate. Histidine 235 functions as the Proton acceptor in the catalytic mechanism. The active site involves glutamate 237. Arginine 249 contacts substrate.

This sequence belongs to the MetA family. In terms of assembly, homodimer.

The protein localises to the cytoplasm. The catalysed reaction is L-homoserine + succinyl-CoA = O-succinyl-L-homoserine + CoA. It participates in amino-acid biosynthesis; L-methionine biosynthesis via de novo pathway; O-succinyl-L-homoserine from L-homoserine: step 1/1. Transfers a succinyl group from succinyl-CoA to L-homoserine, forming succinyl-L-homoserine. In Salmonella gallinarum (strain 287/91 / NCTC 13346), this protein is Homoserine O-succinyltransferase.